Consider the following 593-residue polypeptide: Metal-response element-binding transcription factor 2 (593 aa).

The interval 1–24 is disordered; that stretch reads MRDSTGAGNSLVHKRSPLRRNQKT. Residues 12-22 show a composition bias toward basic residues; sequence VHKRSPLRRNQ. Position 24 is a phosphothreonine (T24). The Tudor domain occupies 44–101; sequence CKFEEGQDVLARWSDGLFYLGTIKKINILKQSCFIIFEDSSKSWVLWKDIQTGATGSG. 2 consecutive PHD-type zinc fingers follow at residues 102–157 and 201–255; these read EMVC…CVFA and QCYC…CSSG. Disordered regions lie at residues 357-410 and 444-486; these read VAFK…GPYT and GIAH…TRTG. A Glycyl lysine isopeptide (Lys-Gly) (interchain with G-Cter in SUMO2) cross-link involves residue K360. Positions 360 to 374 are enriched in basic and acidic residues; sequence KAEKEPEGTSHEFKI. Over residues 447–470 the composition is skewed to polar residues; the sequence is HSSNTSDVDLTGASSANETTSASI. A Phosphoserine modification is found at S452. A Glycyl lysine isopeptide (Lys-Gly) (interchain with G-Cter in SUMO2) cross-link involves residue K522.

It belongs to the Polycomblike family. In terms of assembly, associates with the PRC2 complex, which consists of the core components EED, EZH1 or EZH2, SUZ12, and RBBP4, and various combinations of accessory subunits including AEBP2, JARID2, PHF19, MTF2 and EPOP. Forms a dimeric PRC2.1 (class 1, PRC-PCL) complex consisting of at least SUZ12, RBBP4, and PHF19 or MTF2; PHF19 and MTF2 stabilize the dimeric structure which enhances PRC2 interaction with chromatin.

It localises to the nucleus. Its function is as follows. Polycomb group (PcG) protein that specifically binds histone H3 trimethylated at 'Lys-36' (H3K36me3) and recruits the PRC2 complex, thus enhancing PRC2 H3K27me3 methylation activity. Regulates the transcriptional networks during embryonic stem cell self-renewal and differentiation. Promotes recruitment of the PRC2 complex to the inactive X chromosome in differentiating XX ES cells and PRC2 recruitment to target genes in undifferentiated ES cells. Required to repress Hox genes by enhancing H3K27me3 methylation of the PRC2 complex. In some conditions may act as an inhibitor of PRC2 activity: able to activate the CDKN2A gene and promote cellular senescence by suppressing the catalytic activity of the PRC2 complex locally. Binds to the metal-regulating-element (MRE) of MT1A gene promoter. This Mus musculus (Mouse) protein is Metal-response element-binding transcription factor 2 (Mtf2).